The following is a 309-amino-acid chain: Homoserine kinase (309 aa).

91–101 contributes to the ATP binding site; it reads PIGSGLGSSAC.

This sequence belongs to the GHMP kinase family. Homoserine kinase subfamily.

The protein resides in the cytoplasm. The catalysed reaction is L-homoserine + ATP = O-phospho-L-homoserine + ADP + H(+). It participates in amino-acid biosynthesis; L-threonine biosynthesis; L-threonine from L-aspartate: step 4/5. In terms of biological role, catalyzes the ATP-dependent phosphorylation of L-homoserine to L-homoserine phosphate. The chain is Homoserine kinase from Erwinia tasmaniensis (strain DSM 17950 / CFBP 7177 / CIP 109463 / NCPPB 4357 / Et1/99).